The sequence spans 151 residues: Ribosomal RNA large subunit methyltransferase H (151 aa).

S-adenosyl-L-methionine contacts are provided by residues G100 and 119-124 (LSRMTF).

The protein belongs to the RNA methyltransferase RlmH family. As to quaternary structure, homodimer.

It localises to the cytoplasm. It catalyses the reaction pseudouridine(1915) in 23S rRNA + S-adenosyl-L-methionine = N(3)-methylpseudouridine(1915) in 23S rRNA + S-adenosyl-L-homocysteine + H(+). In terms of biological role, specifically methylates the pseudouridine at position 1915 (m3Psi1915) in 23S rRNA. The protein is Ribosomal RNA large subunit methyltransferase H of Thermotoga neapolitana (strain ATCC 49049 / DSM 4359 / NBRC 107923 / NS-E).